The chain runs to 277 residues: 3-methyl-2-oxobutanoate hydroxymethyltransferase (277 aa).

2 residues coordinate Mg(2+): D43 and D82. 3-methyl-2-oxobutanoate-binding positions include 43–44, D82, and K112; that span reads DS. E114 contributes to the Mg(2+) binding site. The active-site Proton acceptor is the E181.

Belongs to the PanB family. Homodecamer; pentamer of dimers. Mg(2+) is required as a cofactor.

It is found in the cytoplasm. The enzyme catalyses 3-methyl-2-oxobutanoate + (6R)-5,10-methylene-5,6,7,8-tetrahydrofolate + H2O = 2-dehydropantoate + (6S)-5,6,7,8-tetrahydrofolate. It participates in cofactor biosynthesis; (R)-pantothenate biosynthesis; (R)-pantoate from 3-methyl-2-oxobutanoate: step 1/2. In terms of biological role, catalyzes the reversible reaction in which hydroxymethyl group from 5,10-methylenetetrahydrofolate is transferred onto alpha-ketoisovalerate to form ketopantoate. The polypeptide is 3-methyl-2-oxobutanoate hydroxymethyltransferase (Listeria monocytogenes serotype 4b (strain CLIP80459)).